Consider the following 449-residue polypeptide: Delta(8)-fatty-acid desaturase 2 (449 aa).

The 85-residue stretch at 7 to 91 (KRYVTSEDLK…VRDHHVSDVS (85 aa)) folds into the Cytochrome b5 heme-binding domain. Residues H42 and H65 each contribute to the heme site. 2 helical membrane passes run 113-133 (VTLY…YGVL) and 138-158 (IWAH…SAYV). The Histidine box-1 signature appears at 160 to 164 (HDSGH). Residues 176–196 (LIQLLSGNCLTGISIAWWKWT) traverse the membrane as a helical segment. Residues 197 to 201 (HNAHH) carry the Histidine box-2 motif. Helical transmembrane passes span 255 to 275 (FYPV…LLLF), 284 to 304 (ALNI…VSFL), and 311 to 331 (FIFV…FCLN). The short motif at 374-378 (QLEHH) is the Histidine box-3 element.

Belongs to the fatty acid desaturase type 1 family. It depends on Fe cation as a cofactor. As to expression, highly expressed in flowers and siliques. Expressed at low levels in roots, leaves and stems.

It is found in the endoplasmic reticulum membrane. The catalysed reaction is an N-acyl-(4R)-4-hydroxysphinganine + 2 Fe(II)-[cytochrome b5] + O2 + 2 H(+) = a (4R,8E)-4-hydroxysphingenine ceramide + 2 Fe(III)-[cytochrome b5] + 2 H2O. It carries out the reaction an N-acyl-(4R)-4-hydroxysphinganine + 2 Fe(II)-[cytochrome b5] + O2 + 2 H(+) = a (4R,8Z)-4-hydroxysphing-8-enine ceramide + 2 Fe(III)-[cytochrome b5] + 2 H2O. Its function is as follows. Plays a major role as delta(8)-fatty-acid desaturase which introduces a double bond at the 8-position in the long-chain base (LCB) of ceramides with or without a hydroxy group at the 4-position. The enzyme produces both the 8E and 8Z isomers (in a 4:1 ratio). This structural modification contributes to the quantitative partitioning of ceramides between the two major sphingolipid classes, glucosylceramides and glycosylinositolphosphoryl ceramides. Sphingolipids are important membrane components involved in environmental stress responses, such as resistance to chilling, and act as cell signaling molecules. This is Delta(8)-fatty-acid desaturase 2 (SLD2) from Arabidopsis thaliana (Mouse-ear cress).